Reading from the N-terminus, the 418-residue chain is MTDNKNLGGSTLLPAYFGEFGGQFVAESLLPALDQLEKAFVDATNHPEFRQELAAYLRDYLGRPTPLTECSNLPLPGQGRGYARIFLKREDLVHGGAHKTNQVIGQALLAKRMGKTRIIAETGAGQHGTATALACSLLGLECVVYMGAKDVARQQPNVYRMQLHGAKVIPVESGSGTLKDAVNEALRDWTATFHESHYLLGTAAGPHPFPTIVREFHKVISEEAKAQMLERTGKMPDVVVACVGGGSNAIGMFADFIDEEGVELVGAEPAGEGLDSGKHGATITNGQIGILHGTRSFLMRSSDGQVEESYSISAGLDYPGVGPQHAHLHSTGRATYVGITDAEALIAFQYLARYEGIIAALESSHALAYALKRAKLAEEEGKQITILVSLSGRGDKDVDHIRRTLEEKPELILKEEER.

Lys99 bears the N6-(pyridoxal phosphate)lysine mark.

It belongs to the TrpB family. Tetramer of two alpha and two beta chains. Requires pyridoxal 5'-phosphate as cofactor.

The catalysed reaction is (1S,2R)-1-C-(indol-3-yl)glycerol 3-phosphate + L-serine = D-glyceraldehyde 3-phosphate + L-tryptophan + H2O. It functions in the pathway amino-acid biosynthesis; L-tryptophan biosynthesis; L-tryptophan from chorismate: step 5/5. Its function is as follows. The beta subunit is responsible for the synthesis of L-tryptophan from indole and L-serine. This chain is Tryptophan synthase beta chain 1 (trpB1), found in Corynebacterium efficiens (strain DSM 44549 / YS-314 / AJ 12310 / JCM 11189 / NBRC 100395).